Reading from the N-terminus, the 145-residue chain is Beta sliding clamp (145 aa).

This sequence belongs to the beta sliding clamp family. Forms a ring-shaped head-to-tail homodimer around DNA which binds and tethers DNA polymerases and other proteins to the DNA. The DNA replisome complex has a single clamp-loading complex (3 tau and 1 each of delta, delta', psi and chi subunits) which binds 3 Pol III cores (1 core on the leading strand and 2 on the lagging strand) each with a beta sliding clamp dimer. Additional proteins in the replisome are other copies of gamma, psi and chi, Ssb, DNA helicase and RNA primase.

Its subcellular location is the cytoplasm. In terms of biological role, confers DNA tethering and processivity to DNA polymerases and other proteins. Acts as a clamp, forming a ring around DNA (a reaction catalyzed by the clamp-loading complex) which diffuses in an ATP-independent manner freely and bidirectionally along dsDNA. Initially characterized for its ability to contact the catalytic subunit of DNA polymerase III (Pol III), a complex, multichain enzyme responsible for most of the replicative synthesis in bacteria; Pol III exhibits 3'-5' exonuclease proofreading activity. The beta chain is required for initiation of replication as well as for processivity of DNA replication. The sequence is that of Beta sliding clamp (dnaN) from Vibrio harveyi (Beneckea harveyi).